Consider the following 538-residue polypeptide: Chaperonin GroEL 1 (538 aa).

Residues 29 to 32, 86 to 90, Gly-413, 478 to 480, and Asp-494 contribute to the ATP site; these read TLGP, DGTTT, and NAA.

It belongs to the chaperonin (HSP60) family. As to quaternary structure, forms a cylinder of 14 subunits composed of two heptameric rings stacked back-to-back. Interacts with the co-chaperonin GroES.

The protein localises to the cytoplasm. It catalyses the reaction ATP + H2O + a folded polypeptide = ADP + phosphate + an unfolded polypeptide.. Together with its co-chaperonin GroES, plays an essential role in assisting protein folding. The GroEL-GroES system forms a nano-cage that allows encapsulation of the non-native substrate proteins and provides a physical environment optimized to promote and accelerate protein folding. The polypeptide is Chaperonin GroEL 1 (Corynebacterium glutamicum (strain ATCC 13032 / DSM 20300 / JCM 1318 / BCRC 11384 / CCUG 27702 / LMG 3730 / NBRC 12168 / NCIMB 10025 / NRRL B-2784 / 534)).